A 138-amino-acid chain; its full sequence is Large ribosomal subunit protein uL16 (138 aa).

The span at 1–13 (MLQPSRRKYRKEQ) shows a compositional bias: basic residues. The segment at 1 to 20 (MLQPSRRKYRKEQKGRNTGL) is disordered.

This sequence belongs to the universal ribosomal protein uL16 family. As to quaternary structure, part of the 50S ribosomal subunit.

In terms of biological role, binds 23S rRNA and is also seen to make contacts with the A and possibly P site tRNAs. In Bordetella avium (strain 197N), this protein is Large ribosomal subunit protein uL16.